Here is a 180-residue protein sequence, read N- to C-terminus: uncharacterized protein (180 aa).

Its subcellular location is the mitochondrion. This is an uncharacterized protein from Marchantia polymorpha (Common liverwort).